The chain runs to 324 residues: Beta-ketoacyl-[acyl-carrier-protein] synthase III (324 aa).

Residues cysteine 112 and histidine 249 contribute to the active site. Residues 250–254 (QANRR) are ACP-binding. Asparagine 279 is a catalytic residue.

The protein belongs to the thiolase-like superfamily. FabH family. As to quaternary structure, homodimer.

It is found in the cytoplasm. It catalyses the reaction malonyl-[ACP] + acetyl-CoA + H(+) = 3-oxobutanoyl-[ACP] + CO2 + CoA. Its pathway is lipid metabolism; fatty acid biosynthesis. In terms of biological role, catalyzes the condensation reaction of fatty acid synthesis by the addition to an acyl acceptor of two carbons from malonyl-ACP. Catalyzes the first condensation reaction which initiates fatty acid synthesis and may therefore play a role in governing the total rate of fatty acid production. Possesses both acetoacetyl-ACP synthase and acetyl transacylase activities. Its substrate specificity determines the biosynthesis of branched-chain and/or straight-chain of fatty acids. The chain is Beta-ketoacyl-[acyl-carrier-protein] synthase III from Streptococcus pyogenes serotype M3 (strain ATCC BAA-595 / MGAS315).